A 221-amino-acid polypeptide reads, in one-letter code: Adenylate kinase (221 aa).

Residue 10-15 (GAGKGT) participates in ATP binding. Positions 30–59 (STGDMLRAAVKAGTPLGLEAKRFMDAGELV) are NMP. AMP-binding positions include Thr31, Arg36, 57–59 (ELV), 85–88 (GFPR), and Gln92. The tract at residues 122–159 (GRRSHAASGRTYHVKFNPPKVEGVDDMTGEPLIQRDDD) is LID. Residues Arg123 and 132-133 (TY) each bind ATP. Residues Arg156 and Arg167 each coordinate AMP. Gly207 is a binding site for ATP.

It belongs to the adenylate kinase family. In terms of assembly, monomer.

Its subcellular location is the cytoplasm. It carries out the reaction AMP + ATP = 2 ADP. It functions in the pathway purine metabolism; AMP biosynthesis via salvage pathway; AMP from ADP: step 1/1. Catalyzes the reversible transfer of the terminal phosphate group between ATP and AMP. Plays an important role in cellular energy homeostasis and in adenine nucleotide metabolism. This is Adenylate kinase from Paraburkholderia phytofirmans (strain DSM 17436 / LMG 22146 / PsJN) (Burkholderia phytofirmans).